A 110-amino-acid polypeptide reads, in one-letter code: Small ribosomal subunit protein bS18 (110 aa).

Over residues 1 to 18 the composition is skewed to low complexity; it reads MSEATTTTTTTSAPRPGG. A disordered region spans residues 1–41; sequence MSEATTTTTTTSAPRPGGRPSGPRPDRGPGGPRKKRPFQRR. Basic residues predominate over residues 32-41; that stretch reads PRKKRPFQRR.

It belongs to the bacterial ribosomal protein bS18 family. As to quaternary structure, part of the 30S ribosomal subunit. Forms a tight heterodimer with protein bS6.

Functionally, binds as a heterodimer with protein bS6 to the central domain of the 16S rRNA, where it helps stabilize the platform of the 30S subunit. The sequence is that of Small ribosomal subunit protein bS18 from Trichlorobacter lovleyi (strain ATCC BAA-1151 / DSM 17278 / SZ) (Geobacter lovleyi).